The chain runs to 329 residues: Calponin-3 (329 aa).

Position 23 is an N6-acetyllysine (K23). One can recognise a Calponin-homology (CH) domain in the interval 26-130 (HQAEEDLRNW…TLVALAGLAK (105 aa)). K158 is subject to N6-methyllysine. Calponin-like repeat units lie at residues 164–189 (IGLQMGTNKCASQAGMTAYGTRRHLY), 204–229 (ISLQMGTNKGASQAGMLAPGTRRDIY), and 243–268 (ISLQMGTNKVASQKGMSVYGLGRQVY). Residues 279–329 (PVIHNGSQGTGTNGSEISDSDYQAEYPDEYHGEYQDDYPRDYQYSDQGIDY) are disordered. The span at 306 to 318 (DEYHGEYQDDYPR) shows a compositional bias: basic and acidic residues. S323 is subject to Phosphoserine.

It belongs to the calponin family. Expressed in both non-smooth muscle tissues as well as smooth muscle tissues.

Functionally, thin filament-associated protein that is implicated in the regulation and modulation of smooth muscle contraction. It is capable of binding to actin, calmodulin and tropomyosin. The interaction of calponin with actin inhibits the actomyosin Mg-ATPase activity. This is Calponin-3 (CNN3) from Homo sapiens (Human).